Consider the following 128-residue polypeptide: Iron-sulfur cluster insertion protein ErpA (128 aa).

Iron-sulfur cluster contacts are provided by cysteine 56, cysteine 120, and cysteine 122.

This sequence belongs to the HesB/IscA family. Homodimer. Requires iron-sulfur cluster as cofactor.

Required for insertion of 4Fe-4S clusters for at least IspG. This is Iron-sulfur cluster insertion protein ErpA from Xanthomonas oryzae pv. oryzae (strain MAFF 311018).